The primary structure comprises 140 residues: Sec-independent protein translocase protein TatB (140 aa).

The chain crosses the membrane as a helical span at residues 2–22 (LPGIGFSELLLIGLAALIIIG). The segment at 90 to 140 (VNSAVMREHPVSPPPPATPPAPPAELPPEAAPHADSQNAPPEADPAKGDRT) is disordered. Residues 100 to 119 (VSPPPPATPPAPPAELPPEA) are compositionally biased toward pro residues.

This sequence belongs to the TatB family. In terms of assembly, the Tat system comprises two distinct complexes: a TatABC complex, containing multiple copies of TatA, TatB and TatC subunits, and a separate TatA complex, containing only TatA subunits. Substrates initially bind to the TatABC complex, which probably triggers association of the separate TatA complex to form the active translocon.

The protein localises to the cell inner membrane. Functionally, part of the twin-arginine translocation (Tat) system that transports large folded proteins containing a characteristic twin-arginine motif in their signal peptide across membranes. Together with TatC, TatB is part of a receptor directly interacting with Tat signal peptides. TatB may form an oligomeric binding site that transiently accommodates folded Tat precursor proteins before their translocation. The chain is Sec-independent protein translocase protein TatB from Hyphomonas neptunium (strain ATCC 15444).